Here is a 196-residue protein sequence, read N- to C-terminus: dCTP deaminase, dUMP-forming (196 aa).

DCTP is bound by residues 101–106 (KSSLGR), aspartate 119, 127–129 (TLE), glutamine 148, tyrosine 162, and glutamine 174. Glutamate 129 functions as the Proton donor/acceptor in the catalytic mechanism.

Belongs to the dCTP deaminase family. Homotrimer.

The enzyme catalyses dCTP + 2 H2O = dUMP + NH4(+) + diphosphate. The protein operates within pyrimidine metabolism; dUMP biosynthesis; dUMP from dCTP: step 1/1. Its function is as follows. Bifunctional enzyme that catalyzes both the deamination of dCTP to dUTP and the hydrolysis of dUTP to dUMP without releasing the toxic dUTP intermediate. The protein is dCTP deaminase, dUMP-forming of Thermobifida fusca (strain YX).